We begin with the raw amino-acid sequence, 304 residues long: Ornithine carbamoyltransferase (304 aa).

Carbamoyl phosphate contacts are provided by residues 47–50 (STRT), Arg98, and 125–128 (HPCQ). L-ornithine is bound by residues Asn156, Asp221, and 225 to 226 (SM). Residues 262 to 263 (CL) and Arg290 contribute to the carbamoyl phosphate site.

Belongs to the aspartate/ornithine carbamoyltransferase superfamily. OTCase family.

It localises to the cytoplasm. The enzyme catalyses carbamoyl phosphate + L-ornithine = L-citrulline + phosphate + H(+). Its pathway is amino-acid biosynthesis; L-arginine biosynthesis; L-arginine from L-ornithine and carbamoyl phosphate: step 1/3. Reversibly catalyzes the transfer of the carbamoyl group from carbamoyl phosphate (CP) to the N(epsilon) atom of ornithine (ORN) to produce L-citrulline. This chain is Ornithine carbamoyltransferase, found in Methanococcus aeolicus (strain ATCC BAA-1280 / DSM 17508 / OCM 812 / Nankai-3).